A 464-amino-acid chain; its full sequence is 3-isopropylmalate dehydratase large subunit (464 aa).

Cys-337, Cys-397, and Cys-400 together coordinate [4Fe-4S] cluster.

Belongs to the aconitase/IPM isomerase family. LeuC type 1 subfamily. Heterodimer of LeuC and LeuD. [4Fe-4S] cluster is required as a cofactor.

The enzyme catalyses (2R,3S)-3-isopropylmalate = (2S)-2-isopropylmalate. It participates in amino-acid biosynthesis; L-leucine biosynthesis; L-leucine from 3-methyl-2-oxobutanoate: step 2/4. Functionally, catalyzes the isomerization between 2-isopropylmalate and 3-isopropylmalate, via the formation of 2-isopropylmaleate. This chain is 3-isopropylmalate dehydratase large subunit, found in Bacillus cereus (strain ATCC 14579 / DSM 31 / CCUG 7414 / JCM 2152 / NBRC 15305 / NCIMB 9373 / NCTC 2599 / NRRL B-3711).